Consider the following 196-residue polypeptide: ATP-dependent Clp protease proteolytic subunit (196 aa).

Catalysis depends on S101, which acts as the Nucleophile. H126 is an active-site residue.

It belongs to the peptidase S14 family. In terms of assembly, component of the chloroplastic Clp protease core complex.

Its subcellular location is the plastid. The protein localises to the chloroplast stroma. It catalyses the reaction Hydrolysis of proteins to small peptides in the presence of ATP and magnesium. alpha-casein is the usual test substrate. In the absence of ATP, only oligopeptides shorter than five residues are hydrolyzed (such as succinyl-Leu-Tyr-|-NHMec, and Leu-Tyr-Leu-|-Tyr-Trp, in which cleavage of the -Tyr-|-Leu- and -Tyr-|-Trp bonds also occurs).. Functionally, cleaves peptides in various proteins in a process that requires ATP hydrolysis. Has a chymotrypsin-like activity. Plays a major role in the degradation of misfolded proteins. This Eucalyptus globulus subsp. globulus (Tasmanian blue gum) protein is ATP-dependent Clp protease proteolytic subunit.